The primary structure comprises 388 residues: Ribonucleoside-diphosphate reductase subunit beta (388 aa).

Residues Asp-84, Glu-115, and His-118 each coordinate Fe cation. Tyr-122 is a catalytic residue. Residues Glu-212, Glu-247, and His-250 each contribute to the Fe cation site.

This sequence belongs to the ribonucleoside diphosphate reductase small chain family. As to quaternary structure, heterodimer of a large and a small subunit. Fe cation serves as cofactor.

It carries out the reaction a 2'-deoxyribonucleoside 5'-diphosphate + [thioredoxin]-disulfide + H2O = a ribonucleoside 5'-diphosphate + [thioredoxin]-dithiol. Its function is as follows. Provides the precursors necessary for DNA synthesis. Catalyzes the biosynthesis of deoxyribonucleotides from the corresponding ribonucleotides. The chain is Ribonucleoside-diphosphate reductase subunit beta (NRDB) from Escherichia coli (Bacteriophage T4).